A 354-amino-acid polypeptide reads, in one-letter code: Peptide chain release factor 1 (354 aa).

N5-methylglutamine is present on glutamine 231. A compositionally biased stretch (basic and acidic residues) spans 284-304 (EALAKDRKEQVGSGDRSERIR). Residues 284–308 (EALAKDRKEQVGSGDRSERIRTYNF) are disordered.

This sequence belongs to the prokaryotic/mitochondrial release factor family. In terms of processing, methylated by PrmC. Methylation increases the termination efficiency of RF1.

It localises to the cytoplasm. In terms of biological role, peptide chain release factor 1 directs the termination of translation in response to the peptide chain termination codons UAG and UAA. This Nitratiruptor sp. (strain SB155-2) protein is Peptide chain release factor 1.